A 318-amino-acid polypeptide reads, in one-letter code: MYSRIIGTGSYLPEKVLTNQDLESMVDTSDEWIRTRTGIERRHIAAEGQMASDLALEASRNAIEAADIQAKDIDLIIVATTTPDMIFPSTACILQNKLGMSNGPAFDVQAVCSGFIYALATADMFVSSGKARNALVVGAEVYSRIMDWNDRSTCVLFGDGAGAVILTRDQKPGILSSHLHADGSYSQVLTAPASIHSGKIQGTPFITMEGGTVFKFAVKVLEEAALEALQANQLQPSDIDWLIPHQANIRIITSTAKKLGIPEEKVVATVSQHGNTSAASVPLALDQAVRDGRIQPDQHIVLEGVGGGFTWGSVLVRW.

Catalysis depends on residues cysteine 112 and histidine 245. Residues 246–250 (QANIR) form an ACP-binding region. Asparagine 275 is an active-site residue.

Belongs to the thiolase-like superfamily. FabH family. As to quaternary structure, homodimer.

The protein resides in the cytoplasm. It carries out the reaction malonyl-[ACP] + acetyl-CoA + H(+) = 3-oxobutanoyl-[ACP] + CO2 + CoA. It participates in lipid metabolism; fatty acid biosynthesis. Its function is as follows. Catalyzes the condensation reaction of fatty acid synthesis by the addition to an acyl acceptor of two carbons from malonyl-ACP. Catalyzes the first condensation reaction which initiates fatty acid synthesis and may therefore play a role in governing the total rate of fatty acid production. Possesses both acetoacetyl-ACP synthase and acetyl transacylase activities. Its substrate specificity determines the biosynthesis of branched-chain and/or straight-chain of fatty acids. The sequence is that of Beta-ketoacyl-[acyl-carrier-protein] synthase III from Nitrosomonas europaea (strain ATCC 19718 / CIP 103999 / KCTC 2705 / NBRC 14298).